The chain runs to 229 residues: Deoxyribose-phosphate aldolase (229 aa).

Aspartate 84 acts as the Proton donor/acceptor in catalysis. The active-site Schiff-base intermediate with acetaldehyde is lysine 146. Catalysis depends on lysine 188, which acts as the Proton donor/acceptor.

Belongs to the DeoC/FbaB aldolase family. DeoC type 1 subfamily.

It is found in the cytoplasm. The catalysed reaction is 2-deoxy-D-ribose 5-phosphate = D-glyceraldehyde 3-phosphate + acetaldehyde. The protein operates within carbohydrate degradation; 2-deoxy-D-ribose 1-phosphate degradation; D-glyceraldehyde 3-phosphate and acetaldehyde from 2-deoxy-alpha-D-ribose 1-phosphate: step 2/2. Catalyzes a reversible aldol reaction between acetaldehyde and D-glyceraldehyde 3-phosphate to generate 2-deoxy-D-ribose 5-phosphate. This is Deoxyribose-phosphate aldolase from Pyrobaculum neutrophilum (strain DSM 2338 / JCM 9278 / NBRC 100436 / V24Sta) (Thermoproteus neutrophilus).